Reading from the N-terminus, the 141-residue chain is VLSAADKGNVKAAWDKVGGQAGEYGAEALERMFLSFPTTKTYFPHFDLAHGSAQVKGHGKKVADALTNAVGHMDDLPGALSALSDLHAYKLRVDPVNFKLLSHCLLVTLASHHPAEFTPAIHASLDKFFASVSTVLTSKYR.

Residues 1–141 (VLSAADKGNV…VSTVLTSKYR (141 aa)) form the Globin domain. Ser3 carries the phosphoserine modification. N6-succinyllysine occurs at positions 7 and 11. An N6-acetyllysine; alternate modification is found at Lys16. Position 16 is an N6-succinyllysine; alternate (Lys16). Residue Tyr24 is modified to Phosphotyrosine. The residue at position 35 (Ser35) is a Phosphoserine. Lys40 bears the N6-succinyllysine mark. His58 serves as a coordination point for O2. His87 contacts heme b. At Ser102 the chain carries Phosphoserine. Phosphothreonine is present on Thr108. Phosphoserine occurs at positions 124 and 131. Phosphothreonine occurs at positions 134 and 137. Phosphoserine is present on Ser138.

This sequence belongs to the globin family. Heterotetramer of two alpha chains and two beta chains. In terms of tissue distribution, red blood cells.

Involved in oxygen transport from the lung to the various peripheral tissues. Functionally, hemopressin acts as an antagonist peptide of the cannabinoid receptor CNR1. Hemopressin-binding efficiently blocks cannabinoid receptor CNR1 and subsequent signaling. This chain is Hemoglobin subunit alpha (HBA), found in Macrotus californicus (Californian leaf-nosed bat).